The following is a 213-amino-acid chain: Methylthioribulose-1-phosphate dehydratase (213 aa).

Residues His-97 and His-99 each contribute to the Zn(2+) site.

This sequence belongs to the aldolase class II family. MtnB subfamily. Homotetramer. Zn(2+) is required as a cofactor.

It carries out the reaction 5-(methylsulfanyl)-D-ribulose 1-phosphate = 5-methylsulfanyl-2,3-dioxopentyl phosphate + H2O. The protein operates within amino-acid biosynthesis; L-methionine biosynthesis via salvage pathway; L-methionine from S-methyl-5-thio-alpha-D-ribose 1-phosphate: step 2/6. Functionally, catalyzes the dehydration of methylthioribulose-1-phosphate (MTRu-1-P) into 2,3-diketo-5-methylthiopentyl-1-phosphate (DK-MTP-1-P). The protein is Methylthioribulose-1-phosphate dehydratase of Geobacillus sp. (strain WCH70).